Reading from the N-terminus, the 398-residue chain is Succinate--CoA ligase [ADP-forming] subunit beta (398 aa).

Residues 9–237 (RDLFETHGVP…AGGLDILELK (229 aa)) enclose the ATP-grasp domain. ATP-binding positions include K45, 52 to 54 (GRG), A94, and E99. Mg(2+) contacts are provided by N191 and D205. Residues N257 and 319–321 (GIT) contribute to the substrate site.

This sequence belongs to the succinate/malate CoA ligase beta subunit family. Heterotetramer of two alpha and two beta subunits. Mg(2+) serves as cofactor.

The enzyme catalyses succinate + ATP + CoA = succinyl-CoA + ADP + phosphate. It catalyses the reaction GTP + succinate + CoA = succinyl-CoA + GDP + phosphate. The protein operates within carbohydrate metabolism; tricarboxylic acid cycle; succinate from succinyl-CoA (ligase route): step 1/1. Succinyl-CoA synthetase functions in the citric acid cycle (TCA), coupling the hydrolysis of succinyl-CoA to the synthesis of either ATP or GTP and thus represents the only step of substrate-level phosphorylation in the TCA. The beta subunit provides nucleotide specificity of the enzyme and binds the substrate succinate, while the binding sites for coenzyme A and phosphate are found in the alpha subunit. The chain is Succinate--CoA ligase [ADP-forming] subunit beta from Corynebacterium glutamicum (strain ATCC 13032 / DSM 20300 / JCM 1318 / BCRC 11384 / CCUG 27702 / LMG 3730 / NBRC 12168 / NCIMB 10025 / NRRL B-2784 / 534).